The primary structure comprises 165 residues: Probable calcium-binding protein CML18 (165 aa).

EF-hand domains are found at residues 16-51 (EQLA…LGLK), 52-87 (PSQD…DLVK), 90-125 (YTDD…LGHA), and 126-161 (LTAE…AAFD). Ca(2+) contacts are provided by aspartate 29, asparagine 31, aspartate 33, serine 35, glutamate 40, aspartate 65, asparagine 67, asparagine 69, glutamate 76, aspartate 103, aspartate 105, asparagine 107, tyrosine 109, glutamate 114, aspartate 139, aspartate 141, aspartate 143, cysteine 145, and glutamate 150.

Calcium and pH-dependent interaction with NHX1 (increases when pH decreases, better at pH 5.5 than at pH 7.5). Also interacts with the CPB protein At2g18750.

The protein resides in the vacuole. Its function is as follows. Potential calcium sensor that modulates ion selectivity of NHX1. This is Probable calcium-binding protein CML18 (CML18) from Arabidopsis thaliana (Mouse-ear cress).